Consider the following 317-residue polypeptide: MNKFTKTDVTPEKLFIQRRKIIQGMSVLSAAAAFPNLAAAKKTEEKRTALSFKADNKPDLILTPENKVIGYNNYYEFGVDKASPAKFASTLKTEPWTIEVSGEVENPMIFTLAQLLAFPLEERIYRLRCVEAWSMIVPWIGFELSRLLEKAKPTGKAKYVAFETLYDPANMPGQKNTLFGGGLDYPYKEGLTLAEAMNPLTILSVGLYGKTLTPQNGAPIRLVVPWKYGFKSIKSIVKIRLTERQPVTTWNQLTPHEYGFYANVNPEVDHPRWSQASERIIGSGGLFTVKRQPTLPFNGYEKEVAHLYKGLDLKVNF.

The tat-type signal signal peptide spans 1 to 40; the sequence is MNKFTKTDVTPEKLFIQRRKIIQGMSVLSAAAAFPNLAAA. Mo-molybdopterin contacts are provided by residues N72, 75-76, C129, T164, N216, R221, and 232-234; these read YE and SIK.

Belongs to the MsrP family. In terms of assembly, heterodimer of a catalytic subunit (MsrP) and a heme-binding subunit (MsrQ). Requires Mo-molybdopterin as cofactor. Predicted to be exported by the Tat system. The position of the signal peptide cleavage has not been experimentally proven.

The protein resides in the periplasm. The enzyme catalyses L-methionyl-[protein] + a quinone + H2O = L-methionyl-(S)-S-oxide-[protein] + a quinol. The catalysed reaction is L-methionyl-[protein] + a quinone + H2O = L-methionyl-(R)-S-oxide-[protein] + a quinol. In terms of biological role, part of the MsrPQ system that repairs oxidized periplasmic proteins containing methionine sulfoxide residues (Met-O), using respiratory chain electrons. Thus protects these proteins from oxidative-stress damage caused by reactive species of oxygen and chlorine generated by the host defense mechanisms. MsrPQ is essential for the maintenance of envelope integrity under bleach stress, rescuing a wide series of structurally unrelated periplasmic proteins from methionine oxidation. The catalytic subunit MsrP is non-stereospecific, being able to reduce both (R-) and (S-) diastereoisomers of methionine sulfoxide. The chain is Protein-methionine-sulfoxide reductase catalytic subunit MsrP from Actinobacillus succinogenes (strain ATCC 55618 / DSM 22257 / CCUG 43843 / 130Z).